The sequence spans 160 residues: Lipoprotein signal peptidase (160 aa).

3 consecutive transmembrane segments (helical) span residues 6 to 26 (VWSS…IKYL), 58 to 78 (LAWL…AFVL), and 95 to 115 (FALV…HGYV). Catalysis depends on residues Asp-117 and Asp-135. A helical membrane pass occupies residues 127–147 (SFAVFNLADAFITIGAGLIIL).

It belongs to the peptidase A8 family.

The protein resides in the cell inner membrane. It catalyses the reaction Release of signal peptides from bacterial membrane prolipoproteins. Hydrolyzes -Xaa-Yaa-Zaa-|-(S,diacylglyceryl)Cys-, in which Xaa is hydrophobic (preferably Leu), and Yaa (Ala or Ser) and Zaa (Gly or Ala) have small, neutral side chains.. The protein operates within protein modification; lipoprotein biosynthesis (signal peptide cleavage). Functionally, this protein specifically catalyzes the removal of signal peptides from prolipoproteins. This Brucella abortus (strain S19) protein is Lipoprotein signal peptidase.